We begin with the raw amino-acid sequence, 290 residues long: Endo-1,4-beta-xylanase B (290 aa).

The first 19 residues, 1-19, serve as a signal peptide directing secretion; it reads MVSFNSLLVAVSAATCALA. N26 is a glycosylation site (N-linked (GlcNAc...) asparagine). Residues 34 to 222 form the GH11 domain; that stretch reads QSTPAGTGTN…SSGSSTVTVN (189 aa). E118 functions as the Nucleophile in the catalytic mechanism. E209 (proton donor) is an active-site residue. The segment at 223-248 is disordered; that stretch reads PAGGVTSPIAPTGPSSVSTTPSGPSS. The span at 234-248 shows a compositional bias: low complexity; the sequence is TGPSSVSTTPSGPSS. One can recognise a CBM1 domain in the interval 255–290; it reads TCSALYGQCGGQGWTGPTCCSSGTCKFSNNWYSQCL.

This sequence belongs to the glycosyl hydrolase 11 (cellulase G) family.

The protein resides in the secreted. The enzyme catalyses Endohydrolysis of (1-&gt;4)-beta-D-xylosidic linkages in xylans.. The protein operates within glycan degradation; xylan degradation. Endo-1,4-beta-xylanase involved in the hydrolysis of xylan, a major structural heterogeneous polysaccharide found in plant biomass representing the second most abundant polysaccharide in the biosphere, after cellulose. This Phanerodontia chrysosporium (White-rot fungus) protein is Endo-1,4-beta-xylanase B (xynB).